A 359-amino-acid polypeptide reads, in one-letter code: Phospho-N-acetylmuramoyl-pentapeptide-transferase (359 aa).

Helical transmembrane passes span 27–47, 71–91, 93–113, 134–154, 170–190, 203–223, 234–254, 262–282, 286–306, and 336–356; these read IGAA…FIRT, VPTM…LLWA, LDNP…MIGA, LLLQ…HPGY, LGWF…NAVN, MVVS…VVLA, SGEL…FLWF, FMGD…AIII, FLLA…MLQV, and KVVV…IATL.

This sequence belongs to the glycosyltransferase 4 family. MraY subfamily. Mg(2+) is required as a cofactor.

The protein localises to the cell inner membrane. It catalyses the reaction UDP-N-acetyl-alpha-D-muramoyl-L-alanyl-gamma-D-glutamyl-meso-2,6-diaminopimeloyl-D-alanyl-D-alanine + di-trans,octa-cis-undecaprenyl phosphate = di-trans,octa-cis-undecaprenyl diphospho-N-acetyl-alpha-D-muramoyl-L-alanyl-D-glutamyl-meso-2,6-diaminopimeloyl-D-alanyl-D-alanine + UMP. Its pathway is cell wall biogenesis; peptidoglycan biosynthesis. Catalyzes the initial step of the lipid cycle reactions in the biosynthesis of the cell wall peptidoglycan: transfers peptidoglycan precursor phospho-MurNAc-pentapeptide from UDP-MurNAc-pentapeptide onto the lipid carrier undecaprenyl phosphate, yielding undecaprenyl-pyrophosphoryl-MurNAc-pentapeptide, known as lipid I. The sequence is that of Phospho-N-acetylmuramoyl-pentapeptide-transferase from Desulfotalea psychrophila (strain LSv54 / DSM 12343).